Consider the following 593-residue polypeptide: Probable serine/threonine-protein kinase samkB (593 aa).

Residues 29-93 enclose the SAM domain; the sequence is WNNEAVCEWL…SIFKKLKNNN (65 aa). A disordered region spans residues 108–157; that stretch reads ESNSINNSNNNNNNNNNNNNNNNNNNNNNNNNNNNNNNNNNNNNNNKIDT. Residues 113-153 are compositionally biased toward low complexity; that stretch reads NNSNNNNNNNNNNNNNNNNNNNNNNNNNNNNNNNNNNNNNN. Residues 186 to 438 form the Protein kinase domain; sequence YKLIEEIGRG…SKQLLEAQWF (253 aa). ATP contacts are provided by residues 192–200 and Lys216; that span reads IGRGAFSIV. The active-site Proton acceptor is Asp313.

The protein belongs to the protein kinase superfamily. Ser/Thr protein kinase family.

It carries out the reaction L-seryl-[protein] + ATP = O-phospho-L-seryl-[protein] + ADP + H(+). It catalyses the reaction L-threonyl-[protein] + ATP = O-phospho-L-threonyl-[protein] + ADP + H(+). In Dictyostelium discoideum (Social amoeba), this protein is Probable serine/threonine-protein kinase samkB (samkB).